Reading from the N-terminus, the 245-residue chain is 5-oxoprolinase subunit A (245 aa).

Belongs to the LamB/PxpA family. Forms a complex composed of PxpA, PxpB and PxpC.

The enzyme catalyses 5-oxo-L-proline + ATP + 2 H2O = L-glutamate + ADP + phosphate + H(+). Its function is as follows. Catalyzes the cleavage of 5-oxoproline to form L-glutamate coupled to the hydrolysis of ATP to ADP and inorganic phosphate. This Chromobacterium violaceum (strain ATCC 12472 / DSM 30191 / JCM 1249 / CCUG 213 / NBRC 12614 / NCIMB 9131 / NCTC 9757 / MK) protein is 5-oxoprolinase subunit A.